We begin with the raw amino-acid sequence, 158 residues long: UPF0178 protein RPA2191 (158 aa).

It belongs to the UPF0178 family.

The polypeptide is UPF0178 protein RPA2191 (Rhodopseudomonas palustris (strain ATCC BAA-98 / CGA009)).